Consider the following 231-residue polypeptide: Ribose-5-phosphate isomerase A (231 aa).

Residues 32–35 (TGST), 85–88 (DGAD), and 98–101 (KGGG) contribute to the substrate site. The active-site Proton acceptor is E107. Residue K125 participates in substrate binding.

It belongs to the ribose 5-phosphate isomerase family. In terms of assembly, homodimer.

It catalyses the reaction aldehydo-D-ribose 5-phosphate = D-ribulose 5-phosphate. The protein operates within carbohydrate degradation; pentose phosphate pathway; D-ribose 5-phosphate from D-ribulose 5-phosphate (non-oxidative stage): step 1/1. Catalyzes the reversible conversion of ribose-5-phosphate to ribulose 5-phosphate. In Paraburkholderia xenovorans (strain LB400), this protein is Ribose-5-phosphate isomerase A.